A 316-amino-acid chain; its full sequence is ATP synthase gamma chain (316 aa).

Belongs to the ATPase gamma chain family. As to quaternary structure, F-type ATPases have 2 components, CF(1) - the catalytic core - and CF(0) - the membrane proton channel. CF(1) has five subunits: alpha(3), beta(3), gamma(1), delta(1), epsilon(1). CF(0) has three main subunits: a, b and c.

Its subcellular location is the cellular thylakoid membrane. In terms of biological role, produces ATP from ADP in the presence of a proton gradient across the membrane. The gamma chain is believed to be important in regulating ATPase activity and the flow of protons through the CF(0) complex. The protein is ATP synthase gamma chain of Prochlorococcus marinus (strain AS9601).